A 260-amino-acid polypeptide reads, in one-letter code: MSIRIKIDKLRQIVAYFSEFSEEVSINVDSTDELMYIFAALGGSVNIWAIIPLSASVFYRGAENIVFNLPVSKVKSCLCSFHNDAIIDIEPDLENNLVKLSSYHVVSVDCNKELMPIRTDTTICLSIDQKKSYVFNFHKYEEKCCGRTVIHLEWLLGFIKCISQHQHLAIMFKDDNIIMKTPGNTDAFSREYSMTECSQELQKFSFKIAISSLNKLRGFKKRVNVFETRIVMDNDDNILGMLFSDRVQSFKINIFMTFLD.

It belongs to the chordopoxvirinae VLTF-1 family. In terms of assembly, interacts with the late transcription factors VLTF-2 and VLTF-3. Interacts with the late transcription elongation factor VLTF-4. Interacts with itself.

Its function is as follows. Associates with RNA polymerase to initiate transcription from late gene promoters. This is Late transcription factor 1 (OPG093) from Vaccinia virus (strain Ankara) (VACV).